The chain runs to 543 residues: Nucleoside-triphosphatase ntp-1 (543 aa).

Residues 40–60 (VYGFLLTCTCLLLILTIIPMS) form a helical membrane-spanning segment. The Proton acceptor role is filled by E212. The chain crosses the membrane as a helical span at residues 497-517 (QISNFFSFFVILIIVLAVALY).

Belongs to the GDA1/CD39 NTPase family.

The protein localises to the golgi apparatus membrane. It carries out the reaction a ribonucleoside 5'-triphosphate + H2O = a ribonucleoside 5'-diphosphate + phosphate + H(+). In terms of biological role, seems to be able to hydrolyze CTP, ATP and UTP. The sequence is that of Nucleoside-triphosphatase ntp-1 from Caenorhabditis elegans.